A 273-amino-acid chain; its full sequence is Exosome complex component MTR3 (273 aa).

The segment at 1–36 is disordered; sequence MPGDHRRIRGPEESQPPQLYAAEDDETPAARDPTRL.

Belongs to the RNase PH family. Component of the RNA exosome core complex (Exo-9), composed of EXOSC1, EXOSC2, EXOSC3, EXOSC4, EXOSC5, EXOSC6, EXOSC7, EXOSC8 and EXOSC9; within the complex interacts with EXOSC1, EXOSC7 and EXOSC8. The catalytically inactive RNA exosome core complex (Exo-9) associates with the catalytic subunit EXOSC10/RRP6. Exo-9 may associate with DIS3 to form the nucleolar exosome complex, or DIS3L to form the cytoplasmic exosome complex. Exo-9 is formed by a hexameric base ring consisting of the heterodimers EXOSC4-EXOSC9, EXOSC5-EXOSC8 and EXOSC6-EXOSC7, and a cap ring consisting of EXOSC1, EXOSC2 and EXOSC3. The RNA exosome complex associates with cofactors EXOSC10/RRP6, C1D/RRP47, MPHOSPH6/MPP6 and MTREX/MTR4.

It is found in the cytoplasm. The protein localises to the nucleus. It localises to the nucleolus. Its function is as follows. Non-catalytic component of the RNA exosome complex which has 3'-&gt;5' exoribonuclease activity and participates in a multitude of cellular RNA processing and degradation events. In the nucleus, the RNA exosome complex is involved in proper maturation of stable RNA species such as rRNA, snRNA and snoRNA, in the elimination of RNA processing by-products and non-coding 'pervasive' transcripts, such as antisense RNA species and promoter-upstream transcripts (PROMPTs), and of mRNAs with processing defects, thereby limiting or excluding their export to the cytoplasm. The RNA exosome may be involved in Ig class switch recombination (CSR) and/or Ig variable region somatic hypermutation (SHM) by targeting AICDA deamination activity to transcribed dsDNA substrates. In the cytoplasm, the RNA exosome complex is involved in general mRNA turnover and specifically degrades inherently unstable mRNAs containing AU-rich elements (AREs) within their 3' untranslated regions, and in RNA surveillance pathways, preventing translation of aberrant mRNAs. It seems to be involved in degradation of histone mRNA. The catalytic inactive RNA exosome core complex of 9 subunits (Exo-9) is proposed to play a pivotal role in the binding and presentation of RNA for ribonucleolysis, and to serve as a scaffold for the association with catalytic subunits and accessory proteins or complexes. The chain is Exosome complex component MTR3 (Exosc6) from Mus musculus (Mouse).